Consider the following 349-residue polypeptide: Succinylglutamate desuccinylase (349 aa).

Zn(2+)-binding residues include histidine 70, glutamate 73, and histidine 166. Glutamate 229 is an active-site residue.

The protein belongs to the AspA/AstE family. Succinylglutamate desuccinylase subfamily. Requires Zn(2+) as cofactor.

The catalysed reaction is N-succinyl-L-glutamate + H2O = L-glutamate + succinate. It participates in amino-acid degradation; L-arginine degradation via AST pathway; L-glutamate and succinate from L-arginine: step 5/5. Functionally, transforms N(2)-succinylglutamate into succinate and glutamate. This is Succinylglutamate desuccinylase from Burkholderia thailandensis (strain ATCC 700388 / DSM 13276 / CCUG 48851 / CIP 106301 / E264).